The sequence spans 277 residues: Energy-coupling factor transporter ATP-binding protein EcfA1 (277 aa).

One can recognise an ABC transporter domain in the interval 4–238 (IETKNLNYSY…SELLSKNDLK (235 aa)). Position 38–45 (38–45 (GKNGSGKS)) interacts with ATP.

This sequence belongs to the ABC transporter superfamily. Energy-coupling factor EcfA family. Forms a stable energy-coupling factor (ECF) transporter complex composed of 2 membrane-embedded substrate-binding proteins (S component), 2 ATP-binding proteins (A component) and 2 transmembrane proteins (T component).

Its subcellular location is the cell membrane. Its function is as follows. ATP-binding (A) component of a common energy-coupling factor (ECF) ABC-transporter complex. Unlike classic ABC transporters this ECF transporter provides the energy necessary to transport a number of different substrates. The sequence is that of Energy-coupling factor transporter ATP-binding protein EcfA1 from Oenococcus oeni (strain ATCC BAA-331 / PSU-1).